The primary structure comprises 96 residues: Protein RnfH (96 aa).

The protein belongs to the UPF0125 (RnfH) family.

This chain is Protein RnfH, found in Cronobacter sakazakii (strain ATCC BAA-894) (Enterobacter sakazakii).